The chain runs to 277 residues: Large ribosomal subunit protein uL2c (277 aa).

Disordered regions lie at residues 24–57 and 226–266; these read IVQS…RGGG and NAAD…HKYS.

Belongs to the universal ribosomal protein uL2 family. As to quaternary structure, part of the 50S ribosomal subunit.

The protein resides in the plastid. The protein localises to the chloroplast. The protein is Large ribosomal subunit protein uL2c (rpl2) of Zygnema circumcarinatum (Green alga).